The sequence spans 96 residues: Co-chaperonin GroES (96 aa).

The protein belongs to the GroES chaperonin family. Heptamer of 7 subunits arranged in a ring. Interacts with the chaperonin GroEL.

The protein localises to the cytoplasm. Functionally, together with the chaperonin GroEL, plays an essential role in assisting protein folding. The GroEL-GroES system forms a nano-cage that allows encapsulation of the non-native substrate proteins and provides a physical environment optimized to promote and accelerate protein folding. GroES binds to the apical surface of the GroEL ring, thereby capping the opening of the GroEL channel. The protein is Co-chaperonin GroES of Buchnera aphidicola subsp. Acyrthosiphon pisum (strain 5A).